Here is a 480-residue protein sequence, read N- to C-terminus: Aspartyl/glutamyl-tRNA(Asn/Gln) amidotransferase subunit B (480 aa).

It belongs to the GatB/GatE family. GatB subfamily. Heterotrimer of A, B and C subunits.

The enzyme catalyses L-glutamyl-tRNA(Gln) + L-glutamine + ATP + H2O = L-glutaminyl-tRNA(Gln) + L-glutamate + ADP + phosphate + H(+). The catalysed reaction is L-aspartyl-tRNA(Asn) + L-glutamine + ATP + H2O = L-asparaginyl-tRNA(Asn) + L-glutamate + ADP + phosphate + 2 H(+). In terms of biological role, allows the formation of correctly charged Asn-tRNA(Asn) or Gln-tRNA(Gln) through the transamidation of misacylated Asp-tRNA(Asn) or Glu-tRNA(Gln) in organisms which lack either or both of asparaginyl-tRNA or glutaminyl-tRNA synthetases. The reaction takes place in the presence of glutamine and ATP through an activated phospho-Asp-tRNA(Asn) or phospho-Glu-tRNA(Gln). This Streptococcus pneumoniae (strain CGSP14) protein is Aspartyl/glutamyl-tRNA(Asn/Gln) amidotransferase subunit B.